Reading from the N-terminus, the 223-residue chain is MQKQRFCLDTTAITDSDVRRSLGVSNISESAEKIMDIIAQARVQLDISCHIPYNTVYKELVGFLIREECAPETLIKVDTWLVKKTPNRYEIKIPAEIFYEYIKDLRERINKGMRISENAMYETALEAYILSKPDEKDREDVLNEVLSKTVNSFRDKYRNTLRGGTLDSAPDLDVLLLAKELDAAVVANDEGIEKWAQRLGLRFVNARDFPFILQEYLDLWDKK.

This sequence belongs to the HARP family.

It carries out the reaction Endonucleolytic cleavage of RNA, removing 5'-extranucleotides from tRNA precursor.. In terms of biological role, RNA-free RNase P that catalyzes the removal of the 5'-leader sequence from pre-tRNA to produce the mature 5'-terminus. This is RNA-free ribonuclease P from Methanococcus maripaludis (strain C7 / ATCC BAA-1331).